The chain runs to 250 residues: ATP synthase subunit a (250 aa).

6 helical membrane passes run 29–49 (ASLFMAASAAVAVGFLYFATS), 84–104 (FFPLVFSLFMFVLTANLLGMF), 114–134 (IIVTFALAILVIGTVLVYGFY), 143–163 (VFVPSGVPGILLPLVVAIEII), 193–213 (FVASLGALGAVGVGGAVLPLI), and 216–236 (VALTGLEFLVAFLQAYVFAVL).

It belongs to the ATPase A chain family. In terms of assembly, F-type ATPases have 2 components, CF(1) - the catalytic core - and CF(0) - the membrane proton channel. CF(1) has five subunits: alpha(3), beta(3), gamma(1), delta(1), epsilon(1). CF(0) has three main subunits: a(1), b(2) and c(9-12). The alpha and beta chains form an alternating ring which encloses part of the gamma chain. CF(1) is attached to CF(0) by a central stalk formed by the gamma and epsilon chains, while a peripheral stalk is formed by the delta and b chains.

Its subcellular location is the cell inner membrane. In terms of biological role, key component of the proton channel; it plays a direct role in the translocation of protons across the membrane. The chain is ATP synthase subunit a from Rhizobium etli (strain CIAT 652).